A 199-amino-acid chain; its full sequence is RNA pyrophosphohydrolase (199 aa).

Residues 6–154 (GYRPNVGIVL…KREVYELALS (149 aa)) enclose the Nudix hydrolase domain. The Nudix box signature appears at 38 to 59 (GGIQHGESPEQAMYRELHEEVG).

It belongs to the Nudix hydrolase family. RppH subfamily. Requires a divalent metal cation as cofactor.

Accelerates the degradation of transcripts by removing pyrophosphate from the 5'-end of triphosphorylated RNA, leading to a more labile monophosphorylated state that can stimulate subsequent ribonuclease cleavage. The chain is RNA pyrophosphohydrolase from Polynucleobacter asymbioticus (strain DSM 18221 / CIP 109841 / QLW-P1DMWA-1) (Polynucleobacter necessarius subsp. asymbioticus).